Reading from the N-terminus, the 190-residue chain is Large ribosomal subunit protein uL6A (190 aa).

This sequence belongs to the universal ribosomal protein uL6 family. Component of the large ribosomal subunit (LSU). Mature yeast ribosomes consist of a small (40S) and a large (60S) subunit. The 40S small subunit contains 1 molecule of ribosomal RNA (18S rRNA) and at least 33 different proteins. The large 60S subunit contains 3 rRNA molecules (25S, 5.8S and 5S rRNA) and at least 46 different proteins. uL6 lines the binding pocket for eukaryotic elongation factor 2 (eEF2).

The protein resides in the cytoplasm. The protein localises to the nucleus. Component of the ribosome, a large ribonucleoprotein complex responsible for the synthesis of proteins in the cell. The small ribosomal subunit (SSU) binds messenger RNAs (mRNAs) and translates the encoded message by selecting cognate aminoacyl-transfer RNA (tRNA) molecules. The large subunit (LSU) contains the ribosomal catalytic site termed the peptidyl transferase center (PTC), which catalyzes the formation of peptide bonds, thereby polymerizing the amino acids delivered by tRNAs into a polypeptide chain. The nascent polypeptides leave the ribosome through a tunnel in the LSU and interact with protein factors that function in enzymatic processing, targeting, and the membrane insertion of nascent chains at the exit of the ribosomal tunnel. This is Large ribosomal subunit protein uL6A (rpl901) from Schizosaccharomyces pombe (strain 972 / ATCC 24843) (Fission yeast).